Reading from the N-terminus, the 427-residue chain is cAMP-dependent protein kinase regulatory subunit (427 aa).

Positions 38–184 (QFCSNFFIRK…RIKVSISNNF (147 aa)) are dimerization and phosphorylation. Residues 96-145 (TTHMGHPNDHGALHDDDDDPLEDEDDEEFDKFSTEPLPSLPPTNYNRGRR) are disordered. Over residues 110-124 (DDDDDPLEDEDDEEF) the composition is skewed to acidic residues. At Ser147 the chain carries Phosphoserine. Residues 185 to 300 (LFRN…FLSE), Glu250, Arg259, 303 to 422 (LLKS…YHAV), Glu372, and Arg381 each bind 3',5'-cyclic AMP.

It belongs to the cAMP-dependent kinase regulatory chain family. Tetramer, composed of 2 regulatory (R) and 2 catalytic (C) subunits. In the presence of cAMP it dissociates into 2 active monomeric C subunits and an R dimer.

The chain is cAMP-dependent protein kinase regulatory subunit (pkar) from Mucor circinelloides f. lusitanicus (Mucor racemosus var. lusitanicus).